A 291-amino-acid polypeptide reads, in one-letter code: Heterogeneous nuclear ribonucleoprotein D-like-B (291 aa).

2 RRM domains span residues 34 to 116 and 119 to 196; these read SKMF…QGKE and KKVF…AAQP. The disordered stretch occupies residues 196 to 226; sequence PKEVYRQQQQKQQKGGRGGTRGRGRGQGYSN. The span at 210-222 shows a compositional bias: gly residues; sequence GGRGGTRGRGRGQ.

It is found in the nucleus. The protein localises to the cytoplasm. Acts as a transcriptional regulator. Binds DNA and RNA. This chain is Heterogeneous nuclear ribonucleoprotein D-like-B (hnrnpdl-b), found in Xenopus laevis (African clawed frog).